The following is a 915-amino-acid chain: Rab3 GTPase-activating protein catalytic subunit (915 aa).

It belongs to the Rab3-GAP catalytic subunit family. In terms of assembly, the Rab3 GTPase-activating complex is a heterodimer composed of rbg-1 and rbg-2.

The protein resides in the cytoplasm. Its function is as follows. Probable catalytic subunit of a GTPase activating protein that has specificity for Rab3 subfamily. Rab3 proteins are involved in regulated exocytosis of neurotransmitters and hormones. Specifically converts active Rab3-GTP to the inactive form Rab3-GDP. In Caenorhabditis elegans, this protein is Rab3 GTPase-activating protein catalytic subunit (rbg-1).